A 546-amino-acid chain; its full sequence is U3 small nucleolar RNA-associated protein 18 homolog (546 aa).

Disordered regions lie at residues 1-55 (MSLS…LEES), 94-118 (SAVR…EENG), and 177-205 (NPGT…DGGV). Over residues 13-23 (IKREELKKQYE) the composition is skewed to basic and acidic residues. Acidic residues predominate over residues 24-35 (DVEDEEEIGSDD). Serine 33 carries the post-translational modification Phosphoserine. The segment covering 45 to 55 (TEKEKQKLEES) has biased composition (basic and acidic residues). 2 stretches are compositionally biased toward acidic residues: residues 101–117 (DYED…DEEN) and 193–205 (ESSD…DGGV). WD repeat units lie at residues 242–281 (PSNG…NTKI), 372–411 (KMNG…CLYK), 413–454 (VDEG…GGKR), and 509–545 (STMH…HYQN). Residues 389–404 (LLSSGGDGQVYVWDLR) carry the DWD box motif.

It belongs to the WD repeat UTP18 family.

Its subcellular location is the nucleus. The protein resides in the nucleolus. Its function is as follows. Involved in nucleolar processing of pre-18S ribosomal RNA. The protein is U3 small nucleolar RNA-associated protein 18 homolog of Arabidopsis thaliana (Mouse-ear cress).